A 307-amino-acid chain; its full sequence is NmrA-like family domain-containing oxidoreductase flvB (307 aa).

Residues 4–9, 32–36, 53–54, 74–76, and 148–151 each bind NADP(+); these read LITGAT, SSSSP, DY, STN, and YVEG.

It belongs to the NmrA-type oxidoreductase family.

The catalysed reaction is (2S)-5,5-dimethyl-2,3,4,5-tetrahydropyridine-2,6-dicarboxylate + NADPH + 2 H(+) = (6S)-3,3-dimethylpiperidine-2,6-dicarboxylate + NADP(+). It catalyses the reaction (2S)-5,5-dimethyl-2,3,4,5-tetrahydropyridine-2,6-dicarboxylate + NADH + 2 H(+) = (6S)-3,3-dimethylpiperidine-2,6-dicarboxylate + NAD(+). Its pathway is secondary metabolite biosynthesis; terpenoid biosynthesis. Its function is as follows. NmrA-like family domain-containing oxidoreductase; part of the gene cluster that mediates the biosynthesis of flavunoidine, an alkaloidal terpenoid with a tetracyclic cage-like core connected to dimethylcadaverine via a C-N bond and acylated with 5,5-dimethyl-L-pipecolate. The tetracyclic core is synthesized by the terpene cyclase flvE and the cytochrome P450 monooxygenase flvD. The terpene cyclase flvE catalyzes the cyclization of farnesyl pyrophosphate (FPP) to form (1R,4R,5S)-(+)-acoradiene and the cytochrome P450 monooxygenase flvD is then responsible for oxidative conversion of (1R,4R,5S)-(+)-acoradiene into the tetracyclic cage present in the final product flavunoidine. In parallel, the N-methyltransferase flvH dimethylates L-lysine to give N,N-dimethyl-L-Lysin which is decarboxylated by flvG to afford dimethylcadaverine. The terpene cyclase-like protein flvF is the enzyme that attaches the dimethylcadaverine precusor at the C-7 of the tetracyclic cage to yield pre-flavunoidine. The cytochrome monooxygenase flvC hydroxylates the C-10 position of pre-flavunoidine whereas the NRPS flvI acylates the terpenoid core at the hydroxylated C-10 with dimethylpipecolate to yield final flavunoidine. The bifunctional enzyme flvA and the dehydrogenase flvB are responsible for the synthesis of the dimethylpipecolate precursor. The PLP-dependent lyase domain of flvA might use L-O-acetyl-homoserine and alpha-keto-isovalerate to form an intermediary ketone that can cyclize intramolecularly to yield an imine. The imine can be reduced by flvB to yield the 6-carboxylated pipecolate. The C-terminal alpha-KG-dependent oxygenase domain of flvA is then proposed to catalyze the decarboxylation to yield dimethylpipecolate. This is NmrA-like family domain-containing oxidoreductase flvB from Aspergillus flavus (strain ATCC 200026 / FGSC A1120 / IAM 13836 / NRRL 3357 / JCM 12722 / SRRC 167).